Reading from the N-terminus, the 302-residue chain is MTSNEKEMGKSELLVVTGMSGAGKSLVIQSLEDMGFFCVDNLPPVLLPKFVELMAQGNPSLQKVAIAIDLRGKELFKSLVKEIDIIKSRNDVILDVMFLEAKTEKIISRYKESRRAHPLNEQGQRSLIDAINEEREHLSEIRSIANYVIDTTKLKPKELKQRISKFYLDENFETFTINVTSFGFKHGIQMDADLVFDVRFLPNPYYVEELRPFIGLDEPVYNYVMKWKETQIFFDKLTDLLKFMIPGYKKEGKSQLVIAIGCTGGQHRSVALAKRLAEYLNEIFEYNVYVHHRDAHIESGER.

Position 18 to 25 (18 to 25 (GMSGAGKS)) interacts with ATP. 69–72 (DLRG) provides a ligand contact to GTP.

The protein belongs to the RapZ-like family.

Displays ATPase and GTPase activities. The sequence is that of Nucleotide-binding protein SERP0433 from Staphylococcus epidermidis (strain ATCC 35984 / DSM 28319 / BCRC 17069 / CCUG 31568 / BM 3577 / RP62A).